Here is a 196-residue protein sequence, read N- to C-terminus: Pyridoxal 5'-phosphate synthase subunit PdxT (196 aa).

Residue 47-49 (GES) participates in L-glutamine binding. Residue Cys79 is the Nucleophile of the active site. L-glutamine contacts are provided by residues Arg106 and 134 to 135 (IR). Catalysis depends on charge relay system residues His170 and Glu172.

It belongs to the glutaminase PdxT/SNO family. In the presence of PdxS, forms a dodecamer of heterodimers. Only shows activity in the heterodimer.

The catalysed reaction is aldehydo-D-ribose 5-phosphate + D-glyceraldehyde 3-phosphate + L-glutamine = pyridoxal 5'-phosphate + L-glutamate + phosphate + 3 H2O + H(+). It catalyses the reaction L-glutamine + H2O = L-glutamate + NH4(+). The protein operates within cofactor biosynthesis; pyridoxal 5'-phosphate biosynthesis. In terms of biological role, catalyzes the hydrolysis of glutamine to glutamate and ammonia as part of the biosynthesis of pyridoxal 5'-phosphate. The resulting ammonia molecule is channeled to the active site of PdxS. The protein is Pyridoxal 5'-phosphate synthase subunit PdxT of Bacillus anthracis (strain A0248).